The chain runs to 812 residues: Glycerol-3-phosphate acyltransferase (812 aa).

The HXXXXD motif motif lies at 308-313; that stretch reads CHRSHM.

The protein belongs to the GPAT/DAPAT family.

It is found in the cell inner membrane. It catalyses the reaction sn-glycerol 3-phosphate + an acyl-CoA = a 1-acyl-sn-glycero-3-phosphate + CoA. It functions in the pathway phospholipid metabolism; CDP-diacylglycerol biosynthesis; CDP-diacylglycerol from sn-glycerol 3-phosphate: step 1/3. In Pseudoalteromonas translucida (strain TAC 125), this protein is Glycerol-3-phosphate acyltransferase.